A 151-amino-acid polypeptide reads, in one-letter code: UPF0208 membrane protein Spro_3315 (151 aa).

Transmembrane regions (helical) follow at residues 46 to 64 (FAVR…WQIA) and 70 to 90 (GPAI…LWWL).

The protein belongs to the UPF0208 family.

The protein resides in the cell inner membrane. The sequence is that of UPF0208 membrane protein Spro_3315 from Serratia proteamaculans (strain 568).